The primary structure comprises 525 residues: Alcohol O-acetyltransferase 1 (525 aa).

Positions 24 to 41 (GHARRMGSVEDLYVALNR) are membrane association. Catalysis depends on charge relay system residues H191 and D195. The tract at residues 508–525 (QESLEELCSIYKALLLGP) is membrane association.

This sequence belongs to the ATF1 alcohol acetyltransferase family.

The protein localises to the lipid droplet. The protein resides in the endoplasmic reticulum membrane. The enzyme catalyses an aliphatic alcohol + acetyl-CoA = an acetyl ester + CoA. The catalysed reaction is a fatty acyl-CoA + H2O = a fatty acid + CoA + H(+). It catalyses the reaction 3-methylbutanol + acetyl-CoA = 3-methylbutyl acetate + CoA. Found to be inhibited by cadmium, copper, zinc and mercurium divalent cations and sulfhydryl reagents. Inhibited by the addition of unsaturated fatty acids to the culture. In terms of biological role, major alcohol O-acetyltransferase that uses acetyl-CoA to synthesize acetate esters from various alcohols, producing ethyl acetate, isoamyl acetate, isobutyl acetate, butyl acetate, hexyl acetate, heptyl acetate and octyl acetate. The alcohol acyltransferase activity is promiscuous with regard to alcohol but relatively specific for acetyl-CoA since ATF1 does not use any other acyl-CoAs (C3, C4, C5, C6, C8, C10, C12). Acts also as an efficient thioesterase in vitro with specificity towards medium-chain-length acyl-CoAs. In natural environments, the production of aromatic volatile metabolites promotes dispersal through insect vectors. The sequence is that of Alcohol O-acetyltransferase 1 from Saccharomyces cerevisiae (strain ATCC 204508 / S288c) (Baker's yeast).